Here is a 184-residue protein sequence, read N- to C-terminus: NADH-quinone oxidoreductase subunit B (184 aa).

Residues Cys-37, Cys-38, Cys-103, and Cys-132 each contribute to the [4Fe-4S] cluster site. Residues 164–184 (HEREEAAKHALPTHSMKGLLR) are disordered.

This sequence belongs to the complex I 20 kDa subunit family. In terms of assembly, NDH-1 is composed of 14 different subunits. Subunits NuoB, C, D, E, F, and G constitute the peripheral sector of the complex. [4Fe-4S] cluster is required as a cofactor.

The protein resides in the cell membrane. The enzyme catalyses a quinone + NADH + 5 H(+)(in) = a quinol + NAD(+) + 4 H(+)(out). Functionally, NDH-1 shuttles electrons from NADH, via FMN and iron-sulfur (Fe-S) centers, to quinones in the respiratory chain. The immediate electron acceptor for the enzyme in this species is believed to be a menaquinone. Couples the redox reaction to proton translocation (for every two electrons transferred, four hydrogen ions are translocated across the cytoplasmic membrane), and thus conserves the redox energy in a proton gradient. This is NADH-quinone oxidoreductase subunit B from Acidothermus cellulolyticus (strain ATCC 43068 / DSM 8971 / 11B).